A 423-amino-acid chain; its full sequence is Maintenance of mitochondrial morphology protein 1 (423 aa).

At 1 to 15 (MWLDDVASELSFTQG) the chain is on the lumenal side. The helical transmembrane segment at 16–36 (LLLGQLSIVILIGAFIKFFIF) threads the bilayer. The Cytoplasmic segment spans residues 37–423 (GDPPSPDVSA…PGSMPGLSMA (387 aa)). The SMP-LTD domain maps to 110-322 (QPESLDWFNV…EPRFQQIELP (213 aa)). Disordered stretches follow at residues 327 to 370 (RKKN…EAET) and 394 to 423 (SEEG…LSMA). Residues 350–367 (RSRDVERDLREEARKEVE) are compositionally biased toward basic and acidic residues.

It belongs to the MMM1 family. As to quaternary structure, homodimer. Component of the ER-mitochondria encounter structure (ERMES) or MDM complex, composed of mmm1, mdm10, mdm12 and mdm34. A mmm1 homodimer associates with one molecule of mdm12 on each side in a pairwise head-to-tail manner, and the SMP-LTD domains of mmm1 and mdm12 generate a continuous hydrophobic tunnel for phospholipid trafficking.

It localises to the endoplasmic reticulum membrane. Its function is as follows. Component of the ERMES/MDM complex, which serves as a molecular tether to connect the endoplasmic reticulum (ER) and mitochondria. Components of this complex are involved in the control of mitochondrial shape and protein biogenesis, and function in nonvesicular lipid trafficking between the ER and mitochondria. The mdm12-mmm1 subcomplex functions in the major beta-barrel assembly pathway that is responsible for biogenesis of all outer membrane beta-barrel proteins, and acts in a late step after the SAM complex. The mdm10-mdm12-mmm1 subcomplex further acts in the TOM40-specific pathway after the action of the mdm12-mmm1 complex. Essential for establishing and maintaining the structure of mitochondria and maintenance of mtDNA nucleoids. This chain is Maintenance of mitochondrial morphology protein 1, found in Sclerotinia sclerotiorum (strain ATCC 18683 / 1980 / Ss-1) (White mold).